The sequence spans 548 residues: Protein NRT1/ PTR FAMILY 2.4 (548 aa).

12 helical membrane passes run 29 to 49 (TLLG…VFLI), 65 to 85 (IVNG…DSFF), 88 to 108 (IPVI…LTLI), 136 to 156 (ILYA…FILA), 172 to 192 (FFNW…TAIV), 200 to 220 (WKLG…IFVA), 316 to 336 (LVPL…QMSM), 354 to 374 (VSAG…IILN), 393 to 413 (LQKV…SAVV), 429 to 449 (VLWL…HFPA), 468 to 488 (SLTS…IDVI), and 508 to 528 (YLVL…CSWF).

The protein belongs to the major facilitator superfamily. Proton-dependent oligopeptide transporter (POT/PTR) (TC 2.A.17) family. Strongly expressed in the root stele.

The protein resides in the membrane. Transporter involved in a passive nitrate efflux. This is Protein NRT1/ PTR FAMILY 2.4 (NPF2.4) from Arabidopsis thaliana (Mouse-ear cress).